Reading from the N-terminus, the 536-residue chain is Allene oxide synthase, chloroplastic (536 aa).

A chloroplast-targeting transit peptide spans 1-58; it reads MASSALNNLVAVNPNTLSPSPKSTPLPNTFSNLRRVSAFRPIKASLFGDSPIKIPGIT. Lysine 151, histidine 182, and lysine 186 together coordinate heme b. Positions 262, 339, and 345 each coordinate (13S)-hydroperoxy-(9Z,11E)-octadecadienoate. Position 339 (asparagine 339) interacts with (13S)-hydroperoxy-(9Z,11E,15Z)-octadecatrienoate. Lysine 487 and cysteine 489 together coordinate heme b.

This sequence belongs to the cytochrome P450 family. The cofactor is heme b.

The protein resides in the plastid. Its subcellular location is the chloroplast. The enzyme catalyses (13S)-hydroperoxy-(9Z,11E,15Z)-octadecatrienoate = (9Z,13S,15Z)-12,13-epoxyoctadeca-9,11,15-trienoate + H2O. The catalysed reaction is (13S)-hydroperoxy-(9Z,11E)-octadecadienoate = (9Z,13S)-12,13-epoxyoctadeca-9,11-dienoate + H2O. The protein operates within lipid metabolism; oxylipin biosynthesis. Functionally, cytochrome P450 enzyme involved in the biosynthesis of oxylipin jasmonates, important phytohormones acting as growth regulators and signaling molecules for plant defense. Functions as an allene oxide synthase that converts hydroperoxy fatty acids to unstable allene epoxides. Catalyzes the dehydration of 13-HPOTE ((13S)-hydroperoxy-(9Z,11E,15Z)-octadecatrienoate), as well as 13-HPODE ((13S)-hydroperoxy-(9Z,11E)-octadecadienoate). This Linum usitatissimum (Flax) protein is Allene oxide synthase, chloroplastic (CYP74A).